The following is a 277-amino-acid chain: Urease accessory protein UreD (277 aa).

It belongs to the UreD family. As to quaternary structure, ureD, UreF and UreG form a complex that acts as a GTP-hydrolysis-dependent molecular chaperone, activating the urease apoprotein by helping to assemble the nickel containing metallocenter of UreC. The UreE protein probably delivers the nickel.

It localises to the cytoplasm. Its function is as follows. Required for maturation of urease via the functional incorporation of the urease nickel metallocenter. In Yersinia pestis (strain Pestoides F), this protein is Urease accessory protein UreD.